Reading from the N-terminus, the 310-residue chain is Homeobox protein Hox-A13a (310 aa).

The homeobox DNA-binding region spans 244–303 (GRKKRVPYTKVQLKELEREYATNKFITKDKRRRISAQTNLSERQVTIWFQNRRVKEKKVV).

This sequence belongs to the Abd-B homeobox family.

The protein resides in the nucleus. Functionally, sequence-specific transcription factor which is part of a developmental regulatory system that provides cells with specific positional identities on the anterior-posterior axis. In Danio rerio (Zebrafish), this protein is Homeobox protein Hox-A13a (hoxa13a).